The sequence spans 208 residues: NAD-dependent protein deacylase (208 aa).

The Deacetylase sirtuin-type domain maps to 1-208 (MKPICVVLSG…NTGFNPVTGW (208 aa)). 10-29 (GAGISAESGIPTYRAEDGLW) is a binding site for NAD(+). The substrate site is built by Tyr-54 and Arg-57. 87–90 (QNVE) contributes to the NAD(+) binding site. His-105 acts as the Proton acceptor in catalysis. NAD(+) contacts are provided by residues 170–172 (GTS) and 197–199 (NPN).

The protein belongs to the sirtuin family. Class III subfamily.

It is found in the cytoplasm. The enzyme catalyses N(6)-acetyl-L-lysyl-[protein] + NAD(+) + H2O = 2''-O-acetyl-ADP-D-ribose + nicotinamide + L-lysyl-[protein]. The catalysed reaction is N(6)-succinyl-L-lysyl-[protein] + NAD(+) + H2O = 2''-O-succinyl-ADP-D-ribose + nicotinamide + L-lysyl-[protein]. In terms of biological role, NAD-dependent lysine deacetylase and desuccinylase that specifically removes acetyl and succinyl groups on target proteins. Modulates the activities of several proteins which are inactive in their acylated form. The chain is NAD-dependent protein deacylase from Aggregatibacter actinomycetemcomitans (Actinobacillus actinomycetemcomitans).